A 253-amino-acid polypeptide reads, in one-letter code: Ras-like protein family member 11A-like (253 aa).

Residues 43-50 (GASNVGKT), 90-97 (DTPCVSLQ), and 157-160 (NKSD) each bind GTP. A disordered region spans residues 213-233 (GNGEKRKGGLHLARPKSPNMQ).

It belongs to the small GTPase superfamily. Ras family.

It is found in the nucleus. The protein resides in the nucleolus. It catalyses the reaction GTP + H2O = GDP + phosphate + H(+). Functionally, regulator of rDNA transcription. This Danio rerio (Zebrafish) protein is Ras-like protein family member 11A-like.